Here is a 142-residue protein sequence, read N- to C-terminus: Small heat shock protein IbpB (142 aa).

The sHSP domain maps to 26 to 137; that stretch reads TAEHQAFPPY…APQRIAISDR (112 aa).

The protein belongs to the small heat shock protein (HSP20) family. As to quaternary structure, homodimer. Forms homomultimers of about 100-150 subunits at optimal growth temperatures. Conformation changes to oligomers at high temperatures or high ionic concentrations. The decrease in size of the multimers is accompanied by an increase in chaperone activity.

The protein resides in the cytoplasm. Associates with aggregated proteins, together with IbpA, to stabilize and protect them from irreversible denaturation and extensive proteolysis during heat shock and oxidative stress. Aggregated proteins bound to the IbpAB complex are more efficiently refolded and reactivated by the ATP-dependent chaperone systems ClpB and DnaK/DnaJ/GrpE. Its activity is ATP-independent. This is Small heat shock protein IbpB from Enterobacter sp. (strain 638).